The primary structure comprises 362 residues: Alternative oxidase, mitochondrial (362 aa).

A mitochondrion-targeting transit peptide spans 1-64; sequence MNTPKVNILY…RGFTTTSVVR (64 aa). A helical transmembrane segment spans residues 156–176; it reads LVRFIFLESIAGVPGMVAGML. Residues Glu163, Glu202, and His205 each contribute to the Fe cation site. The helical transmembrane segment at 222–242 threads the bilayer; sequence LILGAQGVFFNAMFLSYLVSP. Fe cation is bound by residues Glu253, Glu310, and His313.

It belongs to the alternative oxidase family. Fe cation is required as a cofactor.

The protein resides in the mitochondrion inner membrane. Its function is as follows. Catalyzes cyanide-resistant oxygen consumption. May increase respiration when the cytochrome respiratory pathway is restricted, or in response to low temperatures. This is Alternative oxidase, mitochondrial (aod-1) from Gelasinospora sp. (strain S23).